A 229-amino-acid polypeptide reads, in one-letter code: Peptidase E (229 aa).

Active-site charge relay system residues include Ser120, Asp135, and His157.

The protein belongs to the peptidase S51 family.

Its subcellular location is the cytoplasm. It carries out the reaction Dipeptidase E catalyzes the hydrolysis of dipeptides Asp-|-Xaa. It does not act on peptides with N-terminal Glu, Asn or Gln, nor does it cleave isoaspartyl peptides.. Hydrolyzes dipeptides containing N-terminal aspartate residues. May play a role in allowing the cell to use peptide aspartate to spare carbon otherwise required for the synthesis of the aspartate family of amino acids. In Salmonella arizonae (strain ATCC BAA-731 / CDC346-86 / RSK2980), this protein is Peptidase E.